We begin with the raw amino-acid sequence, 500 residues long: MQTKGGQTWARRALLLGILWATAHLPLSGTSLPQRLPRATGNSTQCVISPSSEFPEGFFTRQERRDGGIIIYFLIIVYMFMAISIVCDEYFLPSLEIISESLGLSQDVAGTTFMAAGSSAPELVTAFLGVFITKGDIGISTILGSAIYNLLGICAACGLLSNTVSTLSCWPLFRDCAAYTISAAAVLGIIYDNQVYWYEGALLLLIYGLYVLVLCFDIKINQYIIKKCSPCCACLAKAMERSEQQPLMGWEDEGQPFIRRQSRTDSGIFYEDSGYSQLSISLHGLSQVSEDPPSVFNMPEADLKRIFWVLSLPIITLLFLTTPDCRKKFWKNYFVITFFMSAIWISAFTYILVWMVTITGETLEIPDTVMGLTLLAAGTSIPDTIASVLVARKGKGDMAMSNIVGSNVFDMLCLGIPWFIKTAFINGSAPAEVNSRGLTYITISLNISIIFLFLAVHFNGWKLDRKLGIVCLLSYLGLATLSVLYELGIIGNNKIRGCGG.

A signal peptide spans Met-1 to Gly-29. The Extracellular portion of the chain corresponds to Thr-30–Asp-66. Residues Gly-67–Cys-87 form a helical membrane-spanning segment. Over Asp-88–Thr-111 the chain is Cytoplasmic. Residues Thr-112–Ile-132 traverse the membrane as a helical segment. The Extracellular portion of the chain corresponds to Thr-133–Asp-136. Residues Ile-137–Cys-157 form a helical membrane-spanning segment. Topologically, residues Gly-158–Cys-169 are cytoplasmic. Residues Trp-170–Ile-190 form a helical membrane-spanning segment. Residues Tyr-191–Val-195 lie on the Extracellular side of the membrane. Residues Tyr-196–Phe-216 traverse the membrane as a helical segment. Residues Asp-217 to Asp-302 are Cytoplasmic-facing. The helical transmembrane segment at Leu-303–Pro-323 threads the bilayer. Over Asp-324–Tyr-333 the chain is Extracellular. A helical transmembrane segment spans residues Phe-334–Trp-354. The Cytoplasmic portion of the chain corresponds to Met-355–Thr-368. Residues Val-369 to Leu-389 form a helical membrane-spanning segment. Over Val-390–Ala-399 the chain is Extracellular. The chain crosses the membrane as a helical span at residues Met-400–Ile-420. At Lys-421–Gly-437 the chain is on the cytoplasmic side. A helical transmembrane segment spans residues Leu-438–Phe-458. Residues Asn-459–Gly-468 lie on the Extracellular side of the membrane. The helical transmembrane segment at Ile-469–Ile-489 threads the bilayer. The Cytoplasmic portion of the chain corresponds to Ile-490 to Gly-500.

Belongs to the Ca(2+):cation antiporter (CaCA) (TC 2.A.19) family. SLC24A subfamily.

It is found in the golgi apparatus. Its subcellular location is the trans-Golgi network membrane. The protein localises to the melanosome. The catalysed reaction is Ca(2+)(out) + K(+)(out) + 4 Na(+)(in) = Ca(2+)(in) + K(+)(in) + 4 Na(+)(out). Calcium, potassium:sodium antiporter that transports 1 Ca(2+) and 1 K(+) to the melanosome in exchange for 4 cytoplasmic Na(+). Involved in pigmentation, possibly by participating in ion transport in melanosomes. Predominant sodium-calcium exchanger in melanocytes. The chain is Sodium/potassium/calcium exchanger 5 from Homo sapiens (Human).